Here is a 372-residue protein sequence, read N- to C-terminus: Phospho-N-acetylmuramoyl-pentapeptide-transferase (372 aa).

10 helical membrane passes run 25 to 45 (RSLL…PVMI), 73 to 93 (TMGG…WADL), 98 to 118 (VWIV…DDWI), 134 to 154 (FFWT…IAQN), 176 to 196 (SIPL…YLVI), 211 to 231 (GLAI…AYLA), 251 to 271 (LVVI…YNAH), 275 to 295 (IFMG…IAVM), 300 to 320 (IVFA…FLQI), and 349 to 369 (QVVT…LMTL).

Belongs to the glycosyltransferase 4 family. MraY subfamily. Mg(2+) is required as a cofactor.

Its subcellular location is the cell inner membrane. The enzyme catalyses UDP-N-acetyl-alpha-D-muramoyl-L-alanyl-gamma-D-glutamyl-meso-2,6-diaminopimeloyl-D-alanyl-D-alanine + di-trans,octa-cis-undecaprenyl phosphate = di-trans,octa-cis-undecaprenyl diphospho-N-acetyl-alpha-D-muramoyl-L-alanyl-D-glutamyl-meso-2,6-diaminopimeloyl-D-alanyl-D-alanine + UMP. Its pathway is cell wall biogenesis; peptidoglycan biosynthesis. Catalyzes the initial step of the lipid cycle reactions in the biosynthesis of the cell wall peptidoglycan: transfers peptidoglycan precursor phospho-MurNAc-pentapeptide from UDP-MurNAc-pentapeptide onto the lipid carrier undecaprenyl phosphate, yielding undecaprenyl-pyrophosphoryl-MurNAc-pentapeptide, known as lipid I. This Acinetobacter baylyi (strain ATCC 33305 / BD413 / ADP1) protein is Phospho-N-acetylmuramoyl-pentapeptide-transferase.